The chain runs to 206 residues: Small ribosomal subunit protein uS4 (206 aa).

The 61-residue stretch at 96-156 (GRLDNVVYRM…EKAKKQSRVK (61 aa)) folds into the S4 RNA-binding domain.

This sequence belongs to the universal ribosomal protein uS4 family. Part of the 30S ribosomal subunit. Contacts protein S5. The interaction surface between S4 and S5 is involved in control of translational fidelity.

Its function is as follows. One of the primary rRNA binding proteins, it binds directly to 16S rRNA where it nucleates assembly of the body of the 30S subunit. In terms of biological role, with S5 and S12 plays an important role in translational accuracy. This is Small ribosomal subunit protein uS4 from Erwinia tasmaniensis (strain DSM 17950 / CFBP 7177 / CIP 109463 / NCPPB 4357 / Et1/99).